The primary structure comprises 133 residues: Small ribosomal subunit protein uS8 (133 aa).

This sequence belongs to the universal ribosomal protein uS8 family. As to quaternary structure, part of the 30S ribosomal subunit. Contacts proteins S5 and S12.

Functionally, one of the primary rRNA binding proteins, it binds directly to 16S rRNA central domain where it helps coordinate assembly of the platform of the 30S subunit. The sequence is that of Small ribosomal subunit protein uS8 from Chloroflexus aurantiacus (strain ATCC 29364 / DSM 637 / Y-400-fl).